Consider the following 177-residue polypeptide: Probable DNA-directed RNA polymerase subunit delta (177 aa).

The HTH HARE-type domain occupies 14–81 (CSMIEVVHSV…GENRWGLRSW (68 aa)). The disordered stretch occupies residues 93–177 (PQPKPKKKRK…ETEEEEEEEL (85 aa)). A compositionally biased stretch (acidic residues) spans 106–177 (DGFDDYIEED…ETEEEEEEEL (72 aa)).

This sequence belongs to the RpoE family. RNAP is composed of a core of 2 alpha, a beta and a beta' subunits. The core is associated with a delta subunit and one of several sigma factors.

Participates in both the initiation and recycling phases of transcription. In the presence of the delta subunit, RNAP displays an increased specificity of transcription, a decreased affinity for nucleic acids, and an increased efficiency of RNA synthesis because of enhanced recycling. The polypeptide is Probable DNA-directed RNA polymerase subunit delta (Bacillus cereus (strain AH187)).